Consider the following 546-residue polypeptide: Chaperonin GroEL (546 aa).

ATP contacts are provided by residues 30-33 (TLGP), K51, 87-91 (DGTTT), G415, 479-481 (NAA), and D495. The segment at 526–546 (KEEKPDLSGAGAGMGGMGGMM) is disordered. The segment covering 535–546 (AGAGMGGMGGMM) has biased composition (gly residues).

This sequence belongs to the chaperonin (HSP60) family. In terms of assembly, forms a cylinder of 14 subunits composed of two heptameric rings stacked back-to-back. Interacts with the co-chaperonin GroES.

It localises to the cytoplasm. The enzyme catalyses ATP + H2O + a folded polypeptide = ADP + phosphate + an unfolded polypeptide.. In terms of biological role, together with its co-chaperonin GroES, plays an essential role in assisting protein folding. The GroEL-GroES system forms a nano-cage that allows encapsulation of the non-native substrate proteins and provides a physical environment optimized to promote and accelerate protein folding. The protein is Chaperonin GroEL of Wigglesworthia glossinidia brevipalpis.